The primary structure comprises 86 residues: Neurotoxin LmNaTx1 (86 aa).

An N-terminal signal peptide occupies residues 1–18; sequence MKILIIFVIAITVVGVQS. The LCN-type CS-alpha/beta domain maps to 19–85; sequence KDGYPIYSTG…VWTYAENTCG (67 aa). 4 disulfides stabilise this stretch: C33–C84, C37–C58, C44–C65, and C48–C67. C84 is subject to Cysteine amide.

Belongs to the long (4 C-C) scorpion toxin superfamily. Sodium channel inhibitor family. Beta subfamily. In terms of tissue distribution, expressed by the venom gland.

It is found in the secreted. In terms of biological role, binds voltage-independently at site-4 of sodium channels (Nav) and shift the voltage of activation toward more negative potentials thereby affecting sodium channel activation and promoting spontaneous and repetitive firing. The chain is Neurotoxin LmNaTx1 from Lychas mucronatus (Chinese swimming scorpion).